We begin with the raw amino-acid sequence, 190 residues long: Small ribosomal subunit protein eS7 (190 aa).

The protein belongs to the eukaryotic ribosomal protein eS7 family. In terms of assembly, component of the small ribosomal subunit. Part of the small subunit (SSU) processome, composed of more than 70 proteins and the RNA chaperone small nucleolar RNA (snoRNA) U3.

It localises to the cytoplasm. Its subcellular location is the cytoskeleton. The protein resides in the microtubule organizing center. The protein localises to the centrosome. It is found in the nucleus. It localises to the nucleolus. Its function is as follows. Component of the small ribosomal subunit. The ribosome is a large ribonucleoprotein complex responsible for the synthesis of proteins in the cell. Required for rRNA maturation. Part of the small subunit (SSU) processome, first precursor of the small eukaryotic ribosomal subunit. During the assembly of the SSU processome in the nucleolus, many ribosome biogenesis factors, an RNA chaperone and ribosomal proteins associate with the nascent pre-rRNA and work in concert to generate RNA folding, modifications, rearrangements and cleavage as well as targeted degradation of pre-ribosomal RNA by the RNA exosome. This Spodoptera frugiperda (Fall armyworm) protein is Small ribosomal subunit protein eS7 (RpS7).